A 152-amino-acid chain; its full sequence is Superoxide dismutase [Cu-Zn] 4A (152 aa).

Positions 45, 47, and 62 each coordinate Cu cation. Cysteine 56 and cysteine 145 are joined by a disulfide. Positions 62, 70, 79, and 82 each coordinate Zn(2+). Histidine 119 provides a ligand contact to Cu cation.

It belongs to the Cu-Zn superoxide dismutase family. In terms of assembly, homodimer. Cu cation is required as a cofactor. Zn(2+) serves as cofactor.

It localises to the cytoplasm. It catalyses the reaction 2 superoxide + 2 H(+) = H2O2 + O2. Destroys radicals which are normally produced within the cells and which are toxic to biological systems. The chain is Superoxide dismutase [Cu-Zn] 4A (SODCC.3) from Zea mays (Maize).